The primary structure comprises 224 residues: Ribosomal RNA small subunit methyltransferase G (224 aa).

S-adenosyl-L-methionine is bound by residues G92, L97, 143–144, and R156; that span reads VE.

The protein belongs to the methyltransferase superfamily. RNA methyltransferase RsmG family.

The protein localises to the cytoplasm. It catalyses the reaction guanosine(527) in 16S rRNA + S-adenosyl-L-methionine = N(7)-methylguanosine(527) in 16S rRNA + S-adenosyl-L-homocysteine. Functionally, specifically methylates the N7 position of guanine in position 527 of 16S rRNA. In Albidiferax ferrireducens (strain ATCC BAA-621 / DSM 15236 / T118) (Rhodoferax ferrireducens), this protein is Ribosomal RNA small subunit methyltransferase G.